Reading from the N-terminus, the 700-residue chain is Methionine--tRNA ligase (700 aa).

The 'HIGH' region signature appears at 12–22 (PYANGNFHIGH). Residues C143, C146, C156, and C159 each coordinate Zn(2+). The 'KMSKS' region signature appears at 348-352 (KMSKS). K351 is an ATP binding site. The 107-residue stretch at 594–700 (DFSKIDLRIA…AGAQPGMRVH (107 aa)) folds into the tRNA-binding domain.

Belongs to the class-I aminoacyl-tRNA synthetase family. MetG type 1 subfamily. In terms of assembly, homodimer. Zn(2+) serves as cofactor.

The protein localises to the cytoplasm. It carries out the reaction tRNA(Met) + L-methionine + ATP = L-methionyl-tRNA(Met) + AMP + diphosphate. Its function is as follows. Is required not only for elongation of protein synthesis but also for the initiation of all mRNA translation through initiator tRNA(fMet) aminoacylation. This is Methionine--tRNA ligase from Albidiferax ferrireducens (strain ATCC BAA-621 / DSM 15236 / T118) (Rhodoferax ferrireducens).